The primary structure comprises 576 residues: F-actin capping regulator BSP1 (576 aa).

Residues 24–50 are disordered; the sequence is RYSNIPSSKPAGEALSPVRSHNSGEYR. Ser-46, Ser-79, and Ser-88 each carry phosphoserine. Disordered regions lie at residues 132 to 160 and 173 to 316; these read NDSNADKNLPSFEKGPRMPSRGRPRPREK and GRAD…KRIP. Ser-185 carries the phosphoserine modification. Basic and acidic residues predominate over residues 191 to 206; it reads TRRDHIKITDGNEEKP. Phosphoserine is present on Ser-220. Composition is skewed to polar residues over residues 243 to 255 and 264 to 279; these read SRSTKPASFLSSL and KSYNSEMETPKTTVKS. Over residues 304 to 313 the composition is skewed to pro residues; sequence KPTPPSPPAK. Phosphoserine is present on residues Ser-309 and Ser-320. The interval 408–470 is interaction with F-actin; it reads SIPEAIKGIQ…LSLRNNLKKR (63 aa). The tract at residues 541 to 576 is disordered; it reads DKYTTSRDETVKETKPLVHPNKNRTRGPRRKLPTRV. Positions 544–556 are enriched in basic and acidic residues; it reads TTSRDETVKETKP. The tract at residues 547–576 is interaction with the F-actin capping complex; it reads RDETVKETKPLVHPNKNRTRGPRRKLPTRV. A compositionally biased stretch (basic residues) spans 561-576; the sequence is NKNRTRGPRRKLPTRV.

As to quaternary structure, interacts (via C-terminus) with the CAP1-CAP2 F-actin capping protein complex. Interacts with INP52 (via SAC domain); the interaction is direct. Interacts with INP53 (via SAC domain); the interaction is direct. Interacts with RVS167. Interacts with SLA1. In terms of processing, phosphorylated by CDC28.

The protein localises to the cytoplasm. Its subcellular location is the cytoskeleton. It is found in the actin patch. The protein resides in the cell membrane. Its function is as follows. Recruits the capping protein complex to actin patches and the actomyosin contractile ring, and/or stabilizes their interaction. May serve as an adapter to link INP52 and INP53 to the cortical actin cytoskeleton. Binds F-actin. This chain is F-actin capping regulator BSP1 (BSP1), found in Saccharomyces cerevisiae (strain ATCC 204508 / S288c) (Baker's yeast).